Here is a 543-residue protein sequence, read N- to C-terminus: MKRTRRSLPANFDPVYPYDAPKPSTQPPFFNDRKGLTESSPGTLAVNISPPLTFSNLGAIKLSTGAGLILKEGKLEANIGPGLTTNQEGQITVEKDSDGLTFTSPLHKIENTVSLSIGEGLEDESGTLKVNFPSPPPPLLFSPPLAEAGGTVSLPLQESMQVTEGKLGVKPTTYSPPLQKTDQQVSLRVGPGLTVLNGQLQAVQPPATTYKEPLLETENSVSLKVGAGLAVQDGALVATPPNVTFSAPLEKNGNAVSVRVGAGLSIQGNALVATTSPTLTFAYPLIKNNNHITLSAGSGLRVSGGSLTVATGPGLSHINGTIAAVIGAGLKFENNAILAKLGNGLTIRDGAIEAVAPQPSFTPVTLWTGPDPNVNASINGTPVIRSFISLTRDSNLVTVNASFTGEGSYQSVSPTQSQFSLILEFNQFGQLMSTGNLNSTTTWGEKPWGNNTVQVQPSHTWKLCMPNREVYSTPAATLTSCGLNSIAHDGAPNRSIDCMLIINKLRGAATYTLTFRFLNFNKLSSSTVFKTDVLTFTYVGENQ.

The interval 1-36 is disordered; that stretch reads MKRTRRSLPANFDPVYPYDAPKPSTQPPFFNDRKGL.

Belongs to the adenoviridae fiber family. As to quaternary structure, homotrimer. Interacts (via N-terminal tail region) with pentons.

It is found in the virion. It localises to the host nucleus. Functionally, forms spikes that protrude from each vertex of the icosahedral capsid. Interacts with host receptor to provide virion initial attachment to target cell. Fiber proteins are shed during virus entry, when virus is still at the cell surface. This chain is Fiber protein, found in Canine adenovirus serotype 1 (strain CLL) (CAdV-1).